The chain runs to 586 residues: CTP synthase 2 (586 aa).

Residues 300–554 form the Glutamine amidotransferase type-1 domain; sequence SIALVGKYTK…LAATGNLNAY (255 aa). Active-site for GATase activity residues include C399, H526, and E528. Positions 563-586 are disordered; sequence SSDRYSDASDDSFSEPRIAELEIS. 3 positions are modified to phosphoserine: S568, S571, and S574.

It belongs to the CTP synthase family.

The enzyme catalyses UTP + L-glutamine + ATP + H2O = CTP + L-glutamate + ADP + phosphate + 2 H(+). The protein operates within pyrimidine metabolism; CTP biosynthesis via de novo pathway; CTP from UDP: step 2/2. Its function is as follows. Catalyzes the ATP-dependent amination of UTP to CTP with either L-glutamine or ammonia as the source of nitrogen. Constitutes the rate-limiting enzyme in the synthesis of cytosine nucleotides. This Homo sapiens (Human) protein is CTP synthase 2 (CTPS2).